A 416-amino-acid polypeptide reads, in one-letter code: Serine protease hepsin (416 aa).

Over Met1–Ala18 the chain is Cytoplasmic. A helical; Signal-anchor for type II membrane protein transmembrane segment spans residues Ala19 to Val39. Residues Thr40–Pro416 lie on the Extracellular side of the membrane. In terms of domain architecture, SRCR spans Val53–Gln150. 8 cysteine pairs are disulfide-bonded: Cys76/Cys139, Cys89/Cys149, Cys118/Cys137, Cys152/Cys276, Cys187/Cys203, Cys290/Cys358, Cys321/Cys337, and Cys348/Cys380. Asn111 carries N-linked (GlcNAc...) asparagine glycosylation. The 243-residue stretch at Ile162–Lys404 folds into the Peptidase S1 domain. Residues His202 and Asp256 each act as charge relay system in the active site. The Charge relay system role is filled by Ser352.

This sequence belongs to the peptidase S1 family. Widely expressed. Present in brain, heart, kidney, liver, stomach, muscle, lung, testis, skin and eye. Not expressed in ovary and thynus. In inner ear tissues, expressed in stria vascularis, modiolus, organ of Corti and spiral ganglion.

The protein localises to the cell membrane. It is found in the apical cell membrane. The catalysed reaction is Cleavage after basic amino-acid residues, with Arg strongly preferred to Lys.. Serine protease that cleaves extracellular substrates, and contributes to the proteolytic processing of growth factors, such as HGF and MST1/HGFL. Plays a role in cell growth and maintenance of cell morphology. Plays a role in the proteolytic processing of ACE2. Mediates the proteolytic cleavage of urinary UMOD that is required for UMOD polymerization. This chain is Serine protease hepsin (Hpn), found in Rattus norvegicus (Rat).